Here is a 232-residue protein sequence, read N- to C-terminus: Ubiquinone biosynthesis O-methyltransferase (232 aa).

4 residues coordinate S-adenosyl-L-methionine: R36, G55, D76, and M120.

This sequence belongs to the methyltransferase superfamily. UbiG/COQ3 family.

It catalyses the reaction a 3-demethylubiquinol + S-adenosyl-L-methionine = a ubiquinol + S-adenosyl-L-homocysteine + H(+). The catalysed reaction is a 3-(all-trans-polyprenyl)benzene-1,2-diol + S-adenosyl-L-methionine = a 2-methoxy-6-(all-trans-polyprenyl)phenol + S-adenosyl-L-homocysteine + H(+). It participates in cofactor biosynthesis; ubiquinone biosynthesis. O-methyltransferase that catalyzes the 2 O-methylation steps in the ubiquinone biosynthetic pathway. The polypeptide is Ubiquinone biosynthesis O-methyltransferase (Paraburkholderia phytofirmans (strain DSM 17436 / LMG 22146 / PsJN) (Burkholderia phytofirmans)).